The following is a 328-amino-acid chain: Cell division protein ZipA (328 aa).

The Periplasmic portion of the chain corresponds to 1 to 4 (MDLN). The chain crosses the membrane as a helical span at residues 5–25 (TILIIVGIVALVALIVHGLWS). Residues 26-328 (NRREKSKYFD…NAEQAYLARV (303 aa)) are Cytoplasmic-facing. The disordered stretch occupies residues 44–82 (SLTSRSHTQEEMVQPNNISPNTYVENGHTPISQPTTEKL). Polar residues predominate over residues 57–81 (QPNNISPNTYVENGHTPISQPTTEK).

This sequence belongs to the ZipA family. In terms of assembly, interacts with FtsZ via their C-terminal domains.

The protein resides in the cell inner membrane. Essential cell division protein that stabilizes the FtsZ protofilaments by cross-linking them and that serves as a cytoplasmic membrane anchor for the Z ring. Also required for the recruitment to the septal ring of downstream cell division proteins. The polypeptide is Cell division protein ZipA (Haemophilus influenzae (strain PittGG)).